The sequence spans 632 residues: Probable potassium transport system protein Kup 1 (632 aa).

The next 12 membrane-spanning stretches (helical) occupy residues 19-39 (LVLG…LYAL), 59-79 (VISM…VVFV), 110-130 (VLMM…VITP), 146-166 (PQLS…LFLI), 178-198 (FGPI…LHLV), 213-233 (ITFL…VFLV), 256-276 (WFVL…AMLL), 298-318 (MVLL…SGAF), 346-366 (IYLP…VISF), 373-393 (AAAY…LAAV), 403-423 (PALV…FFAA), and 428-448 (VAEG…LLMT).

Belongs to the HAK/KUP transporter (TC 2.A.72) family.

It localises to the cell inner membrane. It catalyses the reaction K(+)(in) + H(+)(in) = K(+)(out) + H(+)(out). Its function is as follows. Transport of potassium into the cell. Likely operates as a K(+):H(+) symporter. The protein is Probable potassium transport system protein Kup 1 of Cupriavidus necator (strain ATCC 17699 / DSM 428 / KCTC 22496 / NCIMB 10442 / H16 / Stanier 337) (Ralstonia eutropha).